Reading from the N-terminus, the 297-residue chain is Urease accessory protein UreD (297 aa).

This sequence belongs to the UreD family. UreD, UreF and UreG form a complex that acts as a GTP-hydrolysis-dependent molecular chaperone, activating the urease apoprotein by helping to assemble the nickel containing metallocenter of UreC. The UreE protein probably delivers the nickel.

The protein resides in the cytoplasm. Required for maturation of urease via the functional incorporation of the urease nickel metallocenter. This Anaeromyxobacter sp. (strain Fw109-5) protein is Urease accessory protein UreD.